We begin with the raw amino-acid sequence, 397 residues long: Riboflavin biosynthesis protein RibBA (397 aa).

The interval 1–199 (MFHRIEEALE…IEDLIAYRRH (199 aa)) is DHBP synthase. Residues 26–27 (RE), D31, 138–142 (RAGHT), and E162 each bind D-ribulose 5-phosphate. A Mg(2+)-binding site is contributed by E27. H141 provides a ligand contact to Mg(2+). The GTP cyclohydrolase II stretch occupies residues 200–397 (HETLVTREVE…VNKLGHLLNL (198 aa)). 250 to 254 (RVHSE) serves as a coordination point for GTP. 3 residues coordinate Zn(2+): C255, C266, and C268. GTP contacts are provided by residues Q271, 293–295 (EGR), and T315. D327 acts as the Proton acceptor; for GTP cyclohydrolase activity in catalysis. The active-site Nucleophile; for GTP cyclohydrolase activity is the R329. Residues T350 and K355 each coordinate GTP.

The protein in the N-terminal section; belongs to the DHBP synthase family. It in the C-terminal section; belongs to the GTP cyclohydrolase II family. Mg(2+) is required as a cofactor. It depends on Mn(2+) as a cofactor. Requires Zn(2+) as cofactor.

The enzyme catalyses D-ribulose 5-phosphate = (2S)-2-hydroxy-3-oxobutyl phosphate + formate + H(+). It carries out the reaction GTP + 4 H2O = 2,5-diamino-6-hydroxy-4-(5-phosphoribosylamino)-pyrimidine + formate + 2 phosphate + 3 H(+). It functions in the pathway cofactor biosynthesis; riboflavin biosynthesis; 2-hydroxy-3-oxobutyl phosphate from D-ribulose 5-phosphate: step 1/1. The protein operates within cofactor biosynthesis; riboflavin biosynthesis; 5-amino-6-(D-ribitylamino)uracil from GTP: step 1/4. Catalyzes the conversion of D-ribulose 5-phosphate to formate and 3,4-dihydroxy-2-butanone 4-phosphate. In terms of biological role, catalyzes the conversion of GTP to 2,5-diamino-6-ribosylamino-4(3H)-pyrimidinone 5'-phosphate (DARP), formate and pyrophosphate. In Bacillus cereus (strain ATCC 10987 / NRS 248), this protein is Riboflavin biosynthesis protein RibBA.